The following is a 291-amino-acid chain: Protease HtpX homolog (291 aa).

Transmembrane regions (helical) follow at residues 4–24 (IALFLITNLAVMAVLGITASL) and 38–58 (LGALLGFAMVMGFGGAFISLL). His-144 serves as a coordination point for Zn(2+). The active site involves Glu-145. Position 148 (His-148) interacts with Zn(2+). The next 2 membrane-spanning stretches (helical) occupy residues 159-179 (LIQGVMNTFVVFLSRAIGYFI) and 197-217 (VTTVVLDLLLGLVAAMIVAWF). Residue Glu-222 coordinates Zn(2+).

This sequence belongs to the peptidase M48B family. Zn(2+) serves as cofactor.

Its subcellular location is the cell inner membrane. This Leptothrix cholodnii (strain ATCC 51168 / LMG 8142 / SP-6) (Leptothrix discophora (strain SP-6)) protein is Protease HtpX homolog.